The chain runs to 392 residues: Serpin B11 (392 aa).

The RCL stretch occupies residues 341-365; that stretch reads EEGTEAAAATGDSIAVKSLPMRAQF.

It belongs to the serpin family. Ov-serpin subfamily. Detected in a restricted number of tissues, including lung, placenta, prostate, and tonsil.

The protein localises to the cytoplasm. Functionally, has no serine protease inhibitory activity, probably due to variants in the scaffold impairing conformational change. This is Serpin B11 (SERPINB11) from Homo sapiens (Human).